The chain runs to 294 residues: 4-hydroxy-tetrahydrodipicolinate synthase (294 aa).

Thr-48 is a binding site for pyruvate. Tyr-136 functions as the Proton donor/acceptor in the catalytic mechanism. The active-site Schiff-base intermediate with substrate is Lys-164. Position 206 (Val-206) interacts with pyruvate.

The protein belongs to the DapA family. As to quaternary structure, homotetramer; dimer of dimers.

Its subcellular location is the cytoplasm. It carries out the reaction L-aspartate 4-semialdehyde + pyruvate = (2S,4S)-4-hydroxy-2,3,4,5-tetrahydrodipicolinate + H2O + H(+). It functions in the pathway amino-acid biosynthesis; L-lysine biosynthesis via DAP pathway; (S)-tetrahydrodipicolinate from L-aspartate: step 3/4. Its function is as follows. Catalyzes the condensation of (S)-aspartate-beta-semialdehyde [(S)-ASA] and pyruvate to 4-hydroxy-tetrahydrodipicolinate (HTPA). The protein is 4-hydroxy-tetrahydrodipicolinate synthase of Desulforudis audaxviator (strain MP104C).